Reading from the N-terminus, the 23-residue chain is Dahlein-4.2 (23 aa).

Expressed by the skin dorsal glands.

Its subcellular location is the secreted. In terms of biological role, has no antimicrobial activity. The chain is Dahlein-4.2 from Ranoidea dahlii (Dahl's aquatic frog).